The chain runs to 485 residues: Ribulose bisphosphate carboxylase large chain (485 aa).

Residues Asn-124 and Thr-174 each contribute to the substrate site. Lys-176 serves as the catalytic Proton acceptor. Lys-178 is a substrate binding site. Mg(2+)-binding residues include Lys-202, Asp-204, and Glu-205. Residue Lys-202 is modified to N6-carboxylysine. The Proton acceptor role is filled by His-294. 3 residues coordinate substrate: Arg-295, His-327, and Ser-379.

Belongs to the RuBisCO large chain family. Type I subfamily. As to quaternary structure, heterohexadecamer of 8 large chains and 8 small chains. The cofactor is Mg(2+).

It carries out the reaction 2 (2R)-3-phosphoglycerate + 2 H(+) = D-ribulose 1,5-bisphosphate + CO2 + H2O. The catalysed reaction is D-ribulose 1,5-bisphosphate + O2 = 2-phosphoglycolate + (2R)-3-phosphoglycerate + 2 H(+). Functionally, ruBisCO catalyzes two reactions: the carboxylation of D-ribulose 1,5-bisphosphate, the primary event in carbon dioxide fixation, as well as the oxidative fragmentation of the pentose substrate. Both reactions occur simultaneously and in competition at the same active site. The protein is Ribulose bisphosphate carboxylase large chain of Rhodopseudomonas palustris (strain ATCC BAA-98 / CGA009).